The following is a 475-amino-acid chain: Sulfate adenylyltransferase subunit 1 (475 aa).

In terms of domain architecture, tr-type G spans Lys-24–Glu-240. Residues Gly-33–Ser-40 are G1. Gly-33 to Ser-40 contacts GTP. A G2 region spans residues Gly-91–Asp-95. A G3 region spans residues Asp-112–Gly-115. Residues Asp-112 to His-116 and Asn-167 to Asp-170 contribute to the GTP site. Residues Asn-167–Asp-170 are G4. Positions Ser-204–Leu-206 are G5.

This sequence belongs to the TRAFAC class translation factor GTPase superfamily. Classic translation factor GTPase family. CysN/NodQ subfamily. As to quaternary structure, heterodimer composed of CysD, the smaller subunit, and CysN.

The catalysed reaction is sulfate + ATP + H(+) = adenosine 5'-phosphosulfate + diphosphate. It participates in sulfur metabolism; hydrogen sulfide biosynthesis; sulfite from sulfate: step 1/3. Its function is as follows. With CysD forms the ATP sulfurylase (ATPS) that catalyzes the adenylation of sulfate producing adenosine 5'-phosphosulfate (APS) and diphosphate, the first enzymatic step in sulfur assimilation pathway. APS synthesis involves the formation of a high-energy phosphoric-sulfuric acid anhydride bond driven by GTP hydrolysis by CysN coupled to ATP hydrolysis by CysD. The chain is Sulfate adenylyltransferase subunit 1 from Aeromonas hydrophila subsp. hydrophila (strain ATCC 7966 / DSM 30187 / BCRC 13018 / CCUG 14551 / JCM 1027 / KCTC 2358 / NCIMB 9240 / NCTC 8049).